The sequence spans 338 residues: Transcription factor MYB76 (338 aa).

2 HTH myb-type domains span residues 9–65 and 66–116; these read GEGL…KPDI and KRGE…KKRL. DNA-binding regions (H-T-H motif) lie at residues 37–61 and 89–112; these read WRDI…TNYL and WSVI…NTHL. Disordered regions lie at residues 123–171 and 176–195; these read PVTH…SSNL and SKIS…CKKR. Residues 140–154 are compositionally biased toward basic and acidic residues; sequence MKFDFQKKSNQDEHS. Over residues 155–171 the composition is skewed to low complexity; the sequence is SQSSSTTPASLPLSSNL.

In terms of assembly, can form complexes with MYC2, MYC3 or MYC4. As to expression, expressed in both vegetative and generative organs. Mostly present in inflorescences, flowers and seedlings, in the transition zone between roots and the foliar part, and stems, and, to a lower extent, in leaves (in midvein and trichomes).

The protein resides in the nucleus. Plays a role in determining the spatial distribution of aliphatic glucosinolates (AGLSs) within the leaf, mostly short chained. Together with MYB28/HAG1 and MYB29/HAG3, promotes aliphatic glucosinolate biosynthesis and represses indolic glucosinolate biosynthesis, but could not activate AGSL biosynthesis on its own. The sequence is that of Transcription factor MYB76 (MYB76) from Arabidopsis thaliana (Mouse-ear cress).